The primary structure comprises 258 residues: uncharacterized protein (258 aa).

N-linked (GlcNAc...) asparagine; by host glycans are attached at residues Asn60, Asn104, and Asn113. The segment covering 147–156 (TTRKPGQKTT) has biased composition (low complexity). The tract at residues 147–183 (TTRKPGQKTTLSRLKTTPNKHTQHKRSTRRTSPRDYN) is disordered. The span at 157–166 (LSRLKTTPNK) shows a compositional bias: polar residues. Over residues 167-177 (HTQHKRSTRRT) the composition is skewed to basic residues. Residue Asn183 is glycosylated (N-linked (GlcNAc...) asparagine; by host). A helical transmembrane segment spans residues 208–228 (AHSAWILIVIIIIIVVILFFF).

Belongs to the RL11 family.

The protein localises to the membrane. This is an uncharacterized protein from Human cytomegalovirus (strain AD169) (HHV-5).